A 283-amino-acid chain; its full sequence is Pantothenate synthetase (283 aa).

30–37 is an ATP binding site; the sequence is MGNLHAGH. Catalysis depends on His37, which acts as the Proton donor. Gln61 lines the (R)-pantoate pocket. Beta-alanine is bound at residue Gln61. Residue 149–152 coordinates ATP; it reads GEKD. Gln155 provides a ligand contact to (R)-pantoate. ATP-binding positions include Val178 and 186 to 189; that span reads LSSR.

The protein belongs to the pantothenate synthetase family. Homodimer.

The protein resides in the cytoplasm. It catalyses the reaction (R)-pantoate + beta-alanine + ATP = (R)-pantothenate + AMP + diphosphate + H(+). It participates in cofactor biosynthesis; (R)-pantothenate biosynthesis; (R)-pantothenate from (R)-pantoate and beta-alanine: step 1/1. Its function is as follows. Catalyzes the condensation of pantoate with beta-alanine in an ATP-dependent reaction via a pantoyl-adenylate intermediate. The chain is Pantothenate synthetase from Pseudomonas aeruginosa (strain UCBPP-PA14).